A 447-amino-acid polypeptide reads, in one-letter code: Probable aspartic protease At2g35615 (447 aa).

A signal peptide spans 1–20 (MATQILLCFFLFFSVTLSSS). Asn-25 carries an N-linked (GlcNAc...) asparagine glycan. Residues 85–439 (FFMSITIGTP…DLETRTVSFQ (355 aa)) enclose the Peptidase A1 domain. Asp-103 is a catalytic residue. N-linked (GlcNAc...) asparagine glycosylation occurs at Asn-251. The active site involves Asp-326.

It belongs to the peptidase A1 family.

The protein resides in the secreted. This Arabidopsis thaliana (Mouse-ear cress) protein is Probable aspartic protease At2g35615.